The chain runs to 381 residues: Cobalt-precorrin-5B C(1)-methyltransferase (381 aa).

The protein belongs to the CbiD family.

It carries out the reaction Co-precorrin-5B + S-adenosyl-L-methionine = Co-precorrin-6A + S-adenosyl-L-homocysteine. It participates in cofactor biosynthesis; adenosylcobalamin biosynthesis; cob(II)yrinate a,c-diamide from sirohydrochlorin (anaerobic route): step 6/10. In terms of biological role, catalyzes the methylation of C-1 in cobalt-precorrin-5B to form cobalt-precorrin-6A. This is Cobalt-precorrin-5B C(1)-methyltransferase from Clostridium botulinum (strain Eklund 17B / Type B).